The sequence spans 354 residues: Putative cinnamyl alcohol dehydrogenase 4 (354 aa).

Positions 47, 69, 70, 100, 103, 106, 114, and 163 each coordinate Zn(2+). NADP(+)-binding positions include Thr167, 188-193 (GLGGLG), 211-216 (STSESK), Thr251, and 297-299 (SVT).

Belongs to the zinc-containing alcohol dehydrogenase family. Homodimer. Requires Zn(2+) as cofactor.

It catalyses the reaction (E)-cinnamyl alcohol + NADP(+) = (E)-cinnamaldehyde + NADPH + H(+). It carries out the reaction (E)-coniferol + NADP(+) = (E)-coniferaldehyde + NADPH + H(+). The catalysed reaction is (E)-sinapyl alcohol + NADP(+) = (E)-sinapaldehyde + NADPH + H(+). The enzyme catalyses (E)-4-coumaroyl alcohol + NADP(+) = (E)-4-coumaraldehyde + NADPH + H(+). It catalyses the reaction (E)-caffeyl alcohol + NADP(+) = (E)-caffeyl aldehyde + NADPH + H(+). It participates in aromatic compound metabolism; phenylpropanoid biosynthesis. Its function is as follows. Involved in lignin biosynthesis. Catalyzes the final step specific for the production of lignin monomers. Catalyzes the NADPH-dependent reduction of coniferaldehyde, 5-hydroxyconiferaldehyde, sinapaldehyde, 4-coumaraldehyde and caffeyl aldehyde to their respective alcohols. The sequence is that of Putative cinnamyl alcohol dehydrogenase 4 from Oryza sativa subsp. japonica (Rice).